The primary structure comprises 349 residues: Protein Wnt-7b (349 aa).

Residues 1–24 (MHRNFRKWIFYVFLCFGVLYVKLG) form the signal peptide. 5 disulfide bridges follow: cysteine 73/cysteine 84, cysteine 123/cysteine 131, cysteine 133/cysteine 152, cysteine 200/cysteine 214, and cysteine 202/cysteine 209. N-linked (GlcNAc...) asparagine glycosylation is found at asparagine 83 and asparagine 127. Serine 206 is lipidated: O-palmitoleoyl serine; by PORCN. A disordered linker region spans residues 238–266 (VEVVRASRLRQPTFLRIKQLRSYQKPMET). Intrachain disulfides connect cysteine 278/cysteine 309, cysteine 294/cysteine 304, cysteine 308/cysteine 348, cysteine 324/cysteine 339, cysteine 326/cysteine 336, and cysteine 331/cysteine 332. Asparagine 295 carries N-linked (GlcNAc...) asparagine glycosylation.

It belongs to the Wnt family. In terms of assembly, forms a soluble 1:1 complex with AFM; this prevents oligomerization and is required for prolonged biological activity. The complex with AFM may represent the physiological form in body fluids. Interacts with FZD1 and FZD10. Interacts with FZD4 (in vitro). Interacts with PORCN. Interacts with glypican GPC3. Interacts (via intrinsically disordered linker region) with RECK; interaction with RECK confers ligand selectivity for Wnt7 in brain endothelial cells and allows these cells to selectively respond to Wnt7. Post-translationally, palmitoleoylation is required for efficient binding to frizzled receptors. Depalmitoleoylation leads to Wnt signaling pathway inhibition. As to expression, moderately expressed in fetal brain, weakly expressed in fetal lung and kidney, and faintly expressed in adult brain, lung and prostate.

It localises to the secreted. The protein localises to the extracellular space. The protein resides in the extracellular matrix. In terms of biological role, ligand for members of the frizzled family of seven transmembrane receptors that functions in the canonical Wnt/beta-catenin signaling pathway. Required for normal fusion of the chorion and the allantois during placenta development. Required for central nervous system (CNS) angiogenesis and blood-brain barrier regulation. The polypeptide is Protein Wnt-7b (WNT7B) (Homo sapiens (Human)).